We begin with the raw amino-acid sequence, 703 residues long: UvrABC system protein B (703 aa).

The region spanning 33-419 is the Helicase ATP-binding domain; that stretch reads ERIENGENDV…SDGVVEQIIR (387 aa). Residue 46–53 participates in ATP binding; sequence GATGTGKT. The Beta-hairpin motif lies at 99–122; it reads YYDYYQPEAYIPQTDTYIEKDSNI. The region spanning 436-589 is the Helicase C-terminal domain; it reads QIDDLLAEIK…QIAYNQEHGI (154 aa). In terms of domain architecture, UVR spans 659-694; it reads ADLIRQLSEQMHTAAEQLQFELAARLRDEIRDLKKE.

It belongs to the UvrB family. Forms a heterotetramer with UvrA during the search for lesions. Interacts with UvrC in an incision complex.

The protein resides in the cytoplasm. Functionally, the UvrABC repair system catalyzes the recognition and processing of DNA lesions. A damage recognition complex composed of 2 UvrA and 2 UvrB subunits scans DNA for abnormalities. Upon binding of the UvrA(2)B(2) complex to a putative damaged site, the DNA wraps around one UvrB monomer. DNA wrap is dependent on ATP binding by UvrB and probably causes local melting of the DNA helix, facilitating insertion of UvrB beta-hairpin between the DNA strands. Then UvrB probes one DNA strand for the presence of a lesion. If a lesion is found the UvrA subunits dissociate and the UvrB-DNA preincision complex is formed. This complex is subsequently bound by UvrC and the second UvrB is released. If no lesion is found, the DNA wraps around the other UvrB subunit that will check the other stand for damage. In Bifidobacterium longum (strain NCC 2705), this protein is UvrABC system protein B.